The primary structure comprises 628 residues: NUAK family SNF1-like kinase 2 (628 aa).

An N-acetylmethionine modification is found at Met1. The 251-residue stretch at 53-303 (YEFLETLGKG…LEDVASHWWV (251 aa)) folds into the Protein kinase domain. ATP contacts are provided by residues 59-67 (LGKGTYGKV) and Lys81. Asp175 (proton acceptor) is an active-site residue. Phosphothreonine; by LKB1 is present on Thr208. Positions 355–493 (KQHAPGGGST…KEQKPPQASG (139 aa)) are disordered. Ser435 is subject to Phosphoserine. A compositionally biased stretch (low complexity) spans 457-469 (SGYYSSPEPSESG). Ser523, Ser544, Ser547, and Ser573 each carry phosphoserine. The interval 531–562 (RPLARASRPSGAVSEDSILSSESFDQLDLPER) is disordered.

It belongs to the protein kinase superfamily. CAMK Ser/Thr protein kinase family. SNF1 subfamily. Mg(2+) serves as cofactor. Phosphorylated at Thr-208 by STK11/LKB1 in complex with STE20-related adapter-alpha (STRADA) pseudo kinase and CAB39. Autophosphorylation is also possible at Thr-208.

The enzyme catalyses L-seryl-[protein] + ATP = O-phospho-L-seryl-[protein] + ADP + H(+). It carries out the reaction L-threonyl-[protein] + ATP = O-phospho-L-threonyl-[protein] + ADP + H(+). With respect to regulation, activated by phosphorylation on Thr-208. Stress-activated kinase involved in tolerance to glucose starvation. Induces cell-cell detachment by increasing F-actin conversion to G-actin. Expression is induced by CD95 or TNF-alpha, via NF-kappa-B. Protects cells from CD95-mediated apoptosis and is required for the increased motility and invasiveness of CD95-activated tumor cells. Phosphorylates LATS1 and LATS2. Plays a key role in neural tube closure during embryonic development through LATS2 phosphorylation and regulation of the nuclear localization of YAP1 a critical downstream regulatory target in the Hippo signaling pathway. The polypeptide is NUAK family SNF1-like kinase 2 (Homo sapiens (Human)).